A 146-amino-acid polypeptide reads, in one-letter code: Large ribosomal subunit protein bL19 (146 aa).

It belongs to the bacterial ribosomal protein bL19 family.

Its function is as follows. This protein is located at the 30S-50S ribosomal subunit interface and may play a role in the structure and function of the aminoacyl-tRNA binding site. This is Large ribosomal subunit protein bL19 from Bartonella henselae (strain ATCC 49882 / DSM 28221 / CCUG 30454 / Houston 1) (Rochalimaea henselae).